Here is a 195-residue protein sequence, read N- to C-terminus: MTSATAGLNLSDSVYERLLRERIIFLGTQVDDDIANKLCAQILLLSAEDPSRDISLYINSPGGSVSAGMAIFDTMQFAECDVATFGMGLAASMGQFLLSAGAKGKRYALPHARIMMHQPSAGIGGTASDIAIMAEQFAHTKREMAELIAEHTGQTVEQITADSDRDRWFTAQQALEYGFVDHVVSRAAQAGGTGQ.

S92 (nucleophile) is an active-site residue. Residue H117 is part of the active site.

It belongs to the peptidase S14 family. As to quaternary structure, fourteen ClpP subunits assemble into 2 heptameric rings which stack back to back to give a disk-like structure with a central cavity, resembling the structure of eukaryotic proteasomes.

The protein localises to the cytoplasm. The enzyme catalyses Hydrolysis of proteins to small peptides in the presence of ATP and magnesium. alpha-casein is the usual test substrate. In the absence of ATP, only oligopeptides shorter than five residues are hydrolyzed (such as succinyl-Leu-Tyr-|-NHMec, and Leu-Tyr-Leu-|-Tyr-Trp, in which cleavage of the -Tyr-|-Leu- and -Tyr-|-Trp bonds also occurs).. In terms of biological role, cleaves peptides in various proteins in a process that requires ATP hydrolysis. Has a chymotrypsin-like activity. Plays a major role in the degradation of misfolded proteins. This is ATP-dependent Clp protease proteolytic subunit 2 from Rhodococcus jostii (strain RHA1).